Reading from the N-terminus, the 121-residue chain is D-ornithine 4,5-aminomutase subunit alpha (121 aa).

Heterotetramer of 2 alpha (OraS) and 2 beta (OraE) subunits.

It catalyses the reaction D-ornithine = (2R,4S)-2,4-diaminopentanoate. Its activity is regulated as follows. Increased activity in the presence of dithiothreitol (DTT) in vitro. Inhibited by 1 mM potassium phosphate and potassium chloride. Inhibited by L-alpha-ornithine, D,L-alpha-lysine, L-beta-lysine (50%-60%), L-alpha-lysine (26%) and by delta-amino-n-valeric acid to a lesser extent. Significant decrease in activity is observed in the presence of 0.2 mM p-chloromercuribenzoate, N-ethylmaleimide and also by 2 mM iodoacetate to a lesser extent but not inhibited by arsenite. Its function is as follows. Component of a complex that catalyzes the reversible migration of the omega amino group of D-ornithine to C-4 to form (2R,4S)-2,4-diaminopentanoic acid. The role of OraS remains obscure; however, it seems to be required for a correct folding of the OraE subunit. The complex is active only on D-ornithine and 2,4-diaminopentanoic acid and not active on L-ornithine, L-beta-lysine, L-alpha-lysine or D-alpha-lysine. This chain is D-ornithine 4,5-aminomutase subunit alpha (oraS), found in Acetoanaerobium sticklandii (strain ATCC 12662 / DSM 519 / JCM 1433 / CCUG 9281 / NCIMB 10654 / HF) (Clostridium sticklandii).